Consider the following 151-residue polypeptide: tRNA-specific adenosine deaminase (151 aa).

Residues 1–111 (MGKEYFLKVA…LDKKHGGVVS (111 aa)) form the CMP/dCMP-type deaminase domain. His52 contacts Zn(2+). The Proton donor role is filled by Glu54. Residues Cys82 and Cys85 each coordinate Zn(2+).

Belongs to the cytidine and deoxycytidylate deaminase family. In terms of assembly, homodimer. It depends on Zn(2+) as a cofactor.

It carries out the reaction adenosine(34) in tRNA + H2O + H(+) = inosine(34) in tRNA + NH4(+). In terms of biological role, catalyzes the deamination of adenosine to inosine at the wobble position 34 of tRNA(Arg2). This Aquifex aeolicus (strain VF5) protein is tRNA-specific adenosine deaminase.